The primary structure comprises 159 residues: NADH-quinone oxidoreductase subunit B (159 aa).

[4Fe-4S] cluster-binding residues include cysteine 37, cysteine 38, cysteine 102, and cysteine 132.

It belongs to the complex I 20 kDa subunit family. In terms of assembly, NDH-1 is composed of 14 different subunits. Subunits NuoB, C, D, E, F, and G constitute the peripheral sector of the complex. The cofactor is [4Fe-4S] cluster.

Its subcellular location is the cell inner membrane. It carries out the reaction a quinone + NADH + 5 H(+)(in) = a quinol + NAD(+) + 4 H(+)(out). In terms of biological role, NDH-1 shuttles electrons from NADH, via FMN and iron-sulfur (Fe-S) centers, to quinones in the respiratory chain. Couples the redox reaction to proton translocation (for every two electrons transferred, four hydrogen ions are translocated across the cytoplasmic membrane), and thus conserves the redox energy in a proton gradient. The sequence is that of NADH-quinone oxidoreductase subunit B from Vesicomyosocius okutanii subsp. Calyptogena okutanii (strain HA).